Consider the following 570-residue polypeptide: Nucleoprotein (570 aa).

The tract at residues 54 to 241 (MRKDKRNDSD…IDVSKSSINV (188 aa)) is binding site for the cap structure m7GTP. The disordered stretch occupies residues 342 to 361 (IDLSQNKQMSPAKPKGAGHG). Asp390 and Glu392 together coordinate Mn(2+). Residues Glu400, Cys507, His510, and Cys530 each contribute to the Zn(2+) site. Asp534 contacts Mn(2+).

Belongs to the arenaviridae nucleocapsid protein family. In terms of assembly, homomultimerizes to form the nucleocapsid. Binds to viral genomic RNA. Interacts with glycoprotein G2. Interacts with protein Z; this interaction probably directs the encapsidated genome to budding sites. Interacts with protein L; this interaction does not interfere with Z-L interaction. Interacts with host IKBKE (via Protein kinase domain); the interaction inhibits IKBKE kinase activity.

The protein localises to the virion. The protein resides in the host cytoplasm. In terms of biological role, encapsidates the genome, protecting it from nucleases. The encapsidated genomic RNA is termed the nucleocapsid (NC). Serves as template for viral transcription and replication. The increased presence of protein N in host cell does not seem to trigger the switch from transcription to replication as observed in other negative strain RNA viruses. Through the interaction with host IKBKE, strongly inhibits the phosphorylation and nuclear translocation of host IRF3, a protein involved in interferon activation pathway, leading to the inhibition of interferon-beta and IRF3-dependent promoters activation. Also encodes a functional 3'-5' exoribonuclease that degrades preferentially dsRNA substrates and thereby participates in the suppression of interferon induction. The protein is Nucleoprotein of Praomys (African soft-furred rats).